The following is a 241-amino-acid chain: Phosphatidylcholine synthase (241 aa).

Over 1-15 the chain is Cytoplasmic; that stretch reads MKIFNYKRVPYAEIR. The helical transmembrane segment at 16-36 threads the bilayer; that stretch reads AFSVHILTASGSFLAFLGVVA. The Periplasmic portion of the chain corresponds to 37-41; the sequence is ASEHR. The chain crosses the membrane as a helical span at residues 42–62; it reads FVDMFWWLGLALLVDGIDGPI. Over 63–76 the chain is Cytoplasmic; the sequence is ARKVRVKEVLPNWS. A helical membrane pass occupies residues 77–97; sequence GDTLDNIIDYVTYVLLPAFAL. Residues 98 to 100 lie on the Periplasmic side of the membrane; that stretch reads YQS. The helical transmembrane segment at 101–121 threads the bilayer; the sequence is GMIGEPLSFVAAGMIVVSSAI. The Cytoplasmic segment spans residues 122 to 133; sequence YYADMGMKTDEY. The chain crosses the membrane as a helical span at residues 134–154; it reads FFSGFPVVWNMVVFTLFVMDA. At 155-159 the chain is on the periplasmic side; it reads SATTA. The chain crosses the membrane as a helical span at residues 160-180; the sequence is MTVVTVSVFLTFLPINFLHPV. Over 181–187 the chain is Cytoplasmic; sequence RVKRLRP. The helical transmembrane segment at 188–208 threads the bilayer; it reads LNLLVVAIWCALGGYALLMHF. The Periplasmic segment spans residues 209-214; it reads ETPTWA. A helical transmembrane segment spans residues 215–235; the sequence is VIAFVASGIYLYCIGGILQFF. Over 236 to 241 the chain is Cytoplasmic; it reads PSLGAK.

This sequence belongs to the CDP-alcohol phosphatidyltransferase class-I family. It depends on Mn(2+) as a cofactor.

Its subcellular location is the cell inner membrane. It carries out the reaction a CDP-1,2-diacyl-sn-glycerol + choline = a 1,2-diacyl-sn-glycero-3-phosphocholine + CMP + H(+). Its function is as follows. Condenses choline with CDP-diglyceride to produce phosphatidylcholine and CMP. Affects motility, biofilm formation and virulence of this bacterium when there is a complete loss of phosphatidylcholine formation due to absence of both the synthase (pcs) and the methylation (pmtA) pathways. The protein is Phosphatidylcholine synthase of Agrobacterium fabrum (strain C58 / ATCC 33970) (Agrobacterium tumefaciens (strain C58)).